A 441-amino-acid chain; its full sequence is Monodehydroascorbate reductase 3 (441 aa).

FAD contacts are provided by residues 14–17 (GGVA), glutamate 41, arginine 48, lysine 53, isoleucine 96, and 147–148 (RE). NAD(+) contacts are provided by residues 173–179 (GGFLGLE), glutamate 197, arginine 203, and glycine 262. 175–179 (FLGLE) serves as a coordination point for NADP(+). Positions 203 and 262 each coordinate NADP(+). Aspartate 299 contributes to the FAD binding site. 315–316 (EH) provides a ligand contact to NAD(+). Position 315–316 (315–316 (EH)) interacts with NADP(+). Residue arginine 321 participates in L-ascorbate binding. Residue tyrosine 350 coordinates FAD. Tyrosine 350 is an NAD(+) binding site. Tyrosine 350 provides a ligand contact to NADP(+). Arginine 352 contributes to the L-ascorbate binding site. Serine 418 carries the phosphoserine modification.

Belongs to the FAD-dependent oxidoreductase family. The cofactor is FAD.

The protein localises to the cytoplasm. It carries out the reaction 2 monodehydro-L-ascorbate radical + NADH + H(+) = 2 L-ascorbate + NAD(+). Catalyzes the conversion of monodehydroascorbate to ascorbate, oxidizing NADH in the process. Required for producing sufficient ascorbate to maintain the interaction between Piriformospora indica and Arabidopsis in a mutualistic state. This is Monodehydroascorbate reductase 3 from Arabidopsis thaliana (Mouse-ear cress).